Here is a 212-residue protein sequence, read N- to C-terminus: Chloramphenicol acetyltransferase (212 aa).

The Proton acceptor role is filled by His-186.

Belongs to the chloramphenicol acetyltransferase family. Homotrimer.

It carries out the reaction chloramphenicol + acetyl-CoA = chloramphenicol 3-acetate + CoA. Its function is as follows. This enzyme is an effector of chloramphenicol resistance in bacteria. The protein is Chloramphenicol acetyltransferase (catD) of Clostridioides difficile (Peptoclostridium difficile).